The chain runs to 599 residues: Elongation factor 4 (599 aa).

Residues 2-184 (KNIRNFSIIA…RLVRDIPPPE (183 aa)) enclose the tr-type G domain. Residues 14–19 (DHGKST) and 131–134 (NKID) contribute to the GTP site.

Belongs to the TRAFAC class translation factor GTPase superfamily. Classic translation factor GTPase family. LepA subfamily.

Its subcellular location is the cell inner membrane. It catalyses the reaction GTP + H2O = GDP + phosphate + H(+). Functionally, required for accurate and efficient protein synthesis under certain stress conditions. May act as a fidelity factor of the translation reaction, by catalyzing a one-codon backward translocation of tRNAs on improperly translocated ribosomes. Back-translocation proceeds from a post-translocation (POST) complex to a pre-translocation (PRE) complex, thus giving elongation factor G a second chance to translocate the tRNAs correctly. Binds to ribosomes in a GTP-dependent manner. The chain is Elongation factor 4 from Escherichia coli (strain SE11).